A 432-amino-acid polypeptide reads, in one-letter code: C4-dicarboxylate transport protein (432 aa).

8 helical membrane passes run 8-28 (ILYV…HYWP), 44-64 (LIKM…IAGM), 78-98 (LLYF…AAHL), 148-168 (GDIL…AVLG), 188-208 (IVHV…AFTI), 222-242 (LIGT…GTIA), 307-327 (IYMT…LTLM), and 355-375 (AATL…ILGI).

Belongs to the dicarboxylate/amino acid:cation symporter (DAACS) (TC 2.A.23) family.

Its subcellular location is the cell inner membrane. Its function is as follows. Responsible for the transport of dicarboxylates such as succinate, fumarate, and malate from the periplasm across the membrane. The protein is C4-dicarboxylate transport protein of Cupriavidus necator (strain ATCC 17699 / DSM 428 / KCTC 22496 / NCIMB 10442 / H16 / Stanier 337) (Ralstonia eutropha).